We begin with the raw amino-acid sequence, 100 residues long: U-myrmeciitoxin(01)-Mg7b (100 aa).

An N-terminal signal peptide occupies residues 1 to 17 (MKLSCLSLALAIILVLA). Positions 18-50 (IVYSPHMEVKALADAEPDAIGFADAFGEADAEP) are excised as a propeptide. A glycan (O-linked (GalNAc...) serine) is linked at serine 85. O-linked (GalNAc...) threonine glycans are attached at residues threonine 94 and threonine 95.

Belongs to the formicidae venom precursor-01 superfamily. Post-translationally, glycosylation is critical to maintaining the aqueous solubility of this protein, but does not directly contribute to its activity. As to expression, expressed by the venom gland.

It is found in the secreted. It localises to the target cell membrane. Neurotoxin that triggers pain behavior and inflammation in mammals, and is paralytic and lethal to insects. Causes a time-dependent increase in cell leak current. May act by targeting membranes. This chain is U-myrmeciitoxin(01)-Mg7b, found in Myrmecia gulosa (Red bulldog ant).